The chain runs to 181 residues: ATP synthase subunit b 2 (181 aa).

Low complexity predominate over residues 1–18; the sequence is MATTTHDAGHGAAEAAHG. Residues 1–20 form a disordered region; it reads MATTTHDAGHGAAEAAHGSS. Residues 34–54 form a helical membrane-spanning segment; it reads IFWLLVTLVVIYLILSRIALP.

This sequence belongs to the ATPase B chain family. In terms of assembly, F-type ATPases have 2 components, F(1) - the catalytic core - and F(0) - the membrane proton channel. F(1) has five subunits: alpha(3), beta(3), gamma(1), delta(1), epsilon(1). F(0) has three main subunits: a(1), b(2) and c(10-14). The alpha and beta chains form an alternating ring which encloses part of the gamma chain. F(1) is attached to F(0) by a central stalk formed by the gamma and epsilon chains, while a peripheral stalk is formed by the delta and b chains.

It is found in the cell inner membrane. In terms of biological role, f(1)F(0) ATP synthase produces ATP from ADP in the presence of a proton or sodium gradient. F-type ATPases consist of two structural domains, F(1) containing the extramembraneous catalytic core and F(0) containing the membrane proton channel, linked together by a central stalk and a peripheral stalk. During catalysis, ATP synthesis in the catalytic domain of F(1) is coupled via a rotary mechanism of the central stalk subunits to proton translocation. Component of the F(0) channel, it forms part of the peripheral stalk, linking F(1) to F(0). The b'-subunit is a diverged and duplicated form of b found in plants and photosynthetic bacteria. This Ruegeria sp. (strain TM1040) (Silicibacter sp.) protein is ATP synthase subunit b 2 (atpF2).